The following is a 153-amino-acid chain: UPF0768 protein PB2B2.18 (153 aa).

It belongs to the UPF0768 family.

The protein is UPF0768 protein PB2B2.18 of Schizosaccharomyces pombe (strain 972 / ATCC 24843) (Fission yeast).